Here is a 257-residue protein sequence, read N- to C-terminus: Membrane protein insertase YidC 1 (257 aa).

An N-terminal signal peptide occupies residues 1-20 (MYRKFGMAAMLVSILLLMTG). A lipid anchor (N-palmitoyl cysteine) is attached at Cys21. Cys21 carries the S-diacylglycerol cysteine lipid modification. 5 helical membrane-spanning segments follow: residues 35–55 (IWDSYFVYPLSWLMIYFANAF), 59–79 (FGLAIIVVTLLIRLLILPLMI), 129–149 (LAGCFPVLIQMPILLAFYHAI), 160–180 (FLWFVLNQPDPILLPIIAGIT), and 205–225 (VMILVFAMFLPSSLALYWVIG).

It belongs to the OXA1/ALB3/YidC family. Type 2 subfamily.

Its subcellular location is the cell membrane. Required for the insertion and/or proper folding and/or complex formation of integral membrane proteins into the membrane. Involved in integration of membrane proteins that insert both dependently and independently of the Sec translocase complex, as well as at least some lipoproteins. The sequence is that of Membrane protein insertase YidC 1 from Halalkalibacterium halodurans (strain ATCC BAA-125 / DSM 18197 / FERM 7344 / JCM 9153 / C-125) (Bacillus halodurans).